We begin with the raw amino-acid sequence, 500 residues long: Trehalose-6-phosphate synthase (500 aa).

Arg-28 contributes to the D-glucose 6-phosphate binding site. 48–49 (GG) is a UDP-alpha-D-glucose binding site. Residues Tyr-104 and Asp-158 each contribute to the D-glucose 6-phosphate site. UDP-alpha-D-glucose is bound by residues Arg-300 and Lys-305. Arg-338 is a binding site for D-glucose 6-phosphate. 403 to 407 (LVAKE) contributes to the UDP-alpha-D-glucose binding site.

The protein belongs to the glycosyltransferase 20 family. Homotetramer.

The catalysed reaction is ADP-alpha-D-glucose + D-glucose 6-phosphate = alpha,alpha-trehalose 6-phosphate + ADP + H(+). The enzyme catalyses CDP-alpha-D-glucose + D-glucose 6-phosphate = alpha,alpha-trehalose 6-phosphate + CDP + H(+). It carries out the reaction GDP-alpha-D-glucose + D-glucose 6-phosphate = alpha,alpha-trehalose 6-phosphate + GDP + H(+). It catalyses the reaction TDP-alpha-D-glucose + D-glucose 6-phosphate = 5-methyl-UDP + alpha,alpha-trehalose 6-phosphate + H(+). The catalysed reaction is D-glucose 6-phosphate + UDP-alpha-D-glucose = alpha,alpha-trehalose 6-phosphate + UDP + H(+). Its pathway is glycan biosynthesis; trehalose biosynthesis. In terms of biological role, probably involved in the osmoprotection via the biosynthesis of trehalose and in the production of glycogen and alpha-glucan via the TreS-Pep2 branch involved in the biosynthesis of maltose-1-phosphate (M1P). Catalyzes the transfer of glucose from UDP-glucose (UDP-Glc) to D-glucose 6-phosphate (Glc-6-P) to form trehalose-6-phosphate. Probably also able to use ADP-Glc, CDP-Glc, GDP-Glc and TDP-Glc as glucosyl donors. The protein is Trehalose-6-phosphate synthase of Mycobacterium marinum (strain ATCC BAA-535 / M).